Here is a 109-residue protein sequence, read N- to C-terminus: Nucleoid-associated protein Cvib_1034 (109 aa).

It belongs to the YbaB/EbfC family. Homodimer.

The protein resides in the cytoplasm. The protein localises to the nucleoid. In terms of biological role, binds to DNA and alters its conformation. May be involved in regulation of gene expression, nucleoid organization and DNA protection. This chain is Nucleoid-associated protein Cvib_1034, found in Chlorobium phaeovibrioides (strain DSM 265 / 1930) (Prosthecochloris vibrioformis (strain DSM 265)).